We begin with the raw amino-acid sequence, 333 residues long: Ketol-acid reductoisomerase (NAD(P)(+)) (333 aa).

Residues alanine 2 to threonine 182 enclose the KARI N-terminal Rossmann domain. NADP(+)-binding positions include tyrosine 25–glutamine 28, serine 51, and aspartate 83–glutamine 86. The active site involves histidine 108. Glycine 134 provides a ligand contact to NADP(+). A KARI C-terminal knotted domain is found at threonine 183–leucine 327. Mg(2+) is bound by residues aspartate 191, glutamate 195, glutamate 227, and glutamate 231. Position 252 (serine 252) interacts with substrate.

The protein belongs to the ketol-acid reductoisomerase family. It depends on Mg(2+) as a cofactor.

The enzyme catalyses (2R)-2,3-dihydroxy-3-methylbutanoate + NAD(+) = (2S)-2-acetolactate + NADH + H(+). The catalysed reaction is (2R)-2,3-dihydroxy-3-methylbutanoate + NADP(+) = (2S)-2-acetolactate + NADPH + H(+). Its pathway is amino-acid biosynthesis; L-isoleucine biosynthesis; L-isoleucine from 2-oxobutanoate: step 2/4. It functions in the pathway amino-acid biosynthesis; L-valine biosynthesis; L-valine from pyruvate: step 2/4. Functionally, involved in the biosynthesis of branched-chain amino acids (BCAA). Catalyzes an alkyl-migration followed by a ketol-acid reduction of (S)-2-acetolactate (S2AL) to yield (R)-2,3-dihydroxy-isovalerate. In the isomerase reaction, S2AL is rearranged via a Mg-dependent methyl migration to produce 3-hydroxy-3-methyl-2-ketobutyrate (HMKB). In the reductase reaction, this 2-ketoacid undergoes a metal-dependent reduction by NADPH or NADH to yield (R)-2,3-dihydroxy-isovalerate. This is Ketol-acid reductoisomerase (NAD(P)(+)) from Hydrogenobaculum sp. (strain Y04AAS1).